The following is a 388-amino-acid chain: Oxytocin receptor (388 aa).

The tract at residues Met1 to Pro32 is disordered. Residues Met1–Leu38 are Extracellular-facing. Asn8 and Asn26 each carry an N-linked (GlcNAc...) asparagine glycan. Residues Ala39 to Ala63 form a helical membrane-spanning segment. Residues Leu64–Leu74 lie on the Cytoplasmic side of the membrane. Residues Phe75 to Leu97 form a helical membrane-spanning segment. Residues Leu98–Arg113 lie on the Extracellular side of the membrane. A disulfide bridge links Cys112 with Cys187. The chain crosses the membrane as a helical span at residues Leu114–Leu135. At Asp136–Arg154 the chain is on the cytoplasmic side. Residues Leu155–Phe175 traverse the membrane as a helical segment. Residues Ser176 to Thr202 are Extracellular-facing. A helical transmembrane segment spans residues Trp203–Phe225. Topologically, residues Lys226–Lys274 are cytoplasmic. A helical transmembrane segment spans residues Met275–Val293. Residues Gln294–Ser308 lie on the Extracellular side of the membrane. A helical transmembrane segment spans residues Ala309–Phe331. Topologically, residues Thr332 to Ala388 are cytoplasmic. A disordered region spans residues Ser354 to Ala388. 2 positions are modified to phosphoserine: Ser365 and Ser367. Residues Ser365 to Ala388 are compositionally biased toward low complexity.

This sequence belongs to the G-protein coupled receptor 1 family. Vasopressin/oxytocin receptor subfamily.

It is found in the cell membrane. Functionally, receptor for oxytocin. The activity of this receptor is mediated by G proteins which activate a phosphatidylinositol-calcium second messenger system. The protein is Oxytocin receptor (Oxtr) of Rattus norvegicus (Rat).